The following is a 414-amino-acid chain: Arrestin domain-containing protein 3 (414 aa).

Short sequence motifs (PPxY motif) lie at residues 346-349 and 391-394; these read PPSY and PPLY. Residues 393–414 form a disordered region; that stretch reads LYSEIDPNPDQPADDRPSCPSR. A compositionally biased stretch (basic and acidic residues) spans 405 to 414; it reads ADDRPSCPSR.

The protein belongs to the arrestin family. Interacts (via PPxY motifs) with NEDD4 (via WW domains). Interacts with ADRB2. Interacts with ADRB3. Interacts with HGS (via PPxY motifs). Does not bind TXN (thioredoxin). Interacts with ITCH.

The protein localises to the cytoplasm. Its subcellular location is the cell membrane. It localises to the lysosome. It is found in the endosome. The protein resides in the early endosome. In terms of biological role, adapter protein that plays a role in regulating cell-surface expression of adrenergic receptors and probably also other G protein-coupled receptors. Plays a role in NEDD4-mediated ubiquitination and endocytosis af activated ADRB2 and subsequent ADRB2 degradation. May recruit NEDD4 to ADRB2. Alternatively, may function as adapter protein that does not play a major role in recruiting NEDD4 to ADRB2, but rather plays a role in a targeting ADRB2 to endosomes. This is Arrestin domain-containing protein 3 (ARRDC3) from Bos taurus (Bovine).